Here is a 158-residue protein sequence, read N- to C-terminus: 2-C-methyl-D-erythritol 2,4-cyclodiphosphate synthase (158 aa).

Positions 8 and 10 each coordinate a divalent metal cation. 4-CDP-2-C-methyl-D-erythritol 2-phosphate is bound by residues 8–10 (DVH) and 34–35 (HS). His42 provides a ligand contact to a divalent metal cation. Residues 56-58 (DIG), 61-65 (FPDDD), 132-135 (TTFE), and Phe139 contribute to the 4-CDP-2-C-methyl-D-erythritol 2-phosphate site.

The protein belongs to the IspF family. Homotrimer. The cofactor is a divalent metal cation.

The enzyme catalyses 4-CDP-2-C-methyl-D-erythritol 2-phosphate = 2-C-methyl-D-erythritol 2,4-cyclic diphosphate + CMP. It participates in isoprenoid biosynthesis; isopentenyl diphosphate biosynthesis via DXP pathway; isopentenyl diphosphate from 1-deoxy-D-xylulose 5-phosphate: step 4/6. Its function is as follows. Involved in the biosynthesis of isopentenyl diphosphate (IPP) and dimethylallyl diphosphate (DMAPP), two major building blocks of isoprenoid compounds. Catalyzes the conversion of 4-diphosphocytidyl-2-C-methyl-D-erythritol 2-phosphate (CDP-ME2P) to 2-C-methyl-D-erythritol 2,4-cyclodiphosphate (ME-CPP) with a corresponding release of cytidine 5-monophosphate (CMP). The chain is 2-C-methyl-D-erythritol 2,4-cyclodiphosphate synthase from Natranaerobius thermophilus (strain ATCC BAA-1301 / DSM 18059 / JW/NM-WN-LF).